Consider the following 556-residue polypeptide: Arginine--tRNA ligase (556 aa).

The 'HIGH' region signature appears at Ala132–His142.

This sequence belongs to the class-I aminoacyl-tRNA synthetase family. In terms of assembly, monomer.

It is found in the cytoplasm. The enzyme catalyses tRNA(Arg) + L-arginine + ATP = L-arginyl-tRNA(Arg) + AMP + diphosphate. The protein is Arginine--tRNA ligase of Shouchella clausii (strain KSM-K16) (Alkalihalobacillus clausii).